We begin with the raw amino-acid sequence, 138 residues long: Acidic phospholipase A2 PL1 (138 aa).

Positions 1-16 are cleaved as a signal peptide; the sequence is MRALWIVAVCLIGAEG. Disulfide bonds link C42–C131, C44–C60, C59–C111, C65–C138, C66–C104, C73–C97, and C91–C102. Ca(2+) is bound by residues Y43, G45, and G47. H63 is a catalytic residue. Position 64 (D64) interacts with Ca(2+). D105 is a catalytic residue.

Belongs to the phospholipase A2 family. Group II subfamily. D49 sub-subfamily. Requires Ca(2+) as cofactor. As to expression, expressed by the venom gland.

It localises to the secreted. It catalyses the reaction a 1,2-diacyl-sn-glycero-3-phosphocholine + H2O = a 1-acyl-sn-glycero-3-phosphocholine + a fatty acid + H(+). Functionally, PLA2 catalyzes the calcium-dependent hydrolysis of the 2-acyl groups in 3-sn-phosphoglycerides. This is Acidic phospholipase A2 PL1 from Vipera renardi (Steppe viper).